Reading from the N-terminus, the 1012-residue chain is Autotransporter adhesin BpaC (1012 aa).

The N-terminal stretch at 1–71 is a signal peptide; the sequence is MNRIFKSIWC…PFAEEAMAAN (71 aa). A surface exposed passenger domain region spans residues 72–921; the sequence is NAGVCLTYNG…VGQLNSAVSG (850 aa). 2 disordered regions span residues 420–746 and 785–809; these read GLQG…AGAT and ENSTANGANSTASGNGSSAFGESAA. The segment covering 427-442 has biased composition (polar residues); sequence ANTGTASGDNSTASGD. Low complexity predominate over residues 443-504; it reads NATASGTNST…ANGTNSTASG (62 aa). Over residues 505 to 519 the composition is skewed to polar residues; the sequence is DNSTASGTNASATGE. Positions 520 to 588 are enriched in low complexity; it reads NSTATGTDST…ANGTNSTASG (69 aa). Polar residues predominate over residues 589-603; the sequence is DNSTASGTNASATGE. A compositionally biased stretch (low complexity) spans 604 to 630; that stretch reads NSTATGTDSTASGSNSTANGTNSTASG. The segment covering 631–645 has biased composition (polar residues); the sequence is DNSTASGTNASATGE. Low complexity-rich tracts occupy residues 646–700 and 708–746; these read NSTA…TASG and TNASATGENSTATGTASTASGSNSTANGANSTASGAGAT. The interval 922–959 is outer membrane translocation of the passenger domain; that stretch reads IRNQMDGMQGQIDTLARDAYSGIAAATALTMIPDVDPG. The translocator domain stretch occupies residues 960–1012; that stretch reads KTLAVGIGTANFKGYQASALGATARITQNLKVKTGVSYSGSNYVWGAGMSYQW.

It belongs to the autotransporter-2 (AT-2) (TC 1.B.40) family. In terms of assembly, homotrimer.

It is found in the cell surface. The protein localises to the cell outer membrane. In terms of biological role, involved in virulence. Mediates adherence to human respiratory epithelial cells. The protein is Autotransporter adhesin BpaC of Burkholderia mallei (strain ATCC 23344).